The chain runs to 298 residues: MLYQQIASNKRKTVYVMIGFAILVLFIGAAVGYVFYDSAMAGIIMAAVIAAIYMAMMIANSTNVVMGMNHATEISEADHPEIWHIVEDMALVANIPMPKVYIVNDASPNAFATGNSPKNAAVAVTTGILERLNREELEGVIGHEVSHIRNYDIRLSTIALALSSAIAMLVNIGMRSFWWGGGRRRNDNDNEGGSLEIVMMIISIVLVILGPIATTIAQLALSRNREYLADASSVELTRNPLGLIHALQKISVSEPMKEADPSSAALYISDPFKKKRTMAHLFDTHPPIEDRIQRLERM.

2 helical membrane-spanning segments follow: residues 15–35 and 39–59; these read YVMI…GYVF and AMAG…MMIA. Position 143 (histidine 143) interacts with Zn(2+). Residue glutamate 144 is part of the active site. Histidine 147 contacts Zn(2+). 2 consecutive transmembrane segments (helical) span residues 158 to 178 and 197 to 217; these read IALA…RSFW and IVMM…TTIA. Glutamate 226 contributes to the Zn(2+) binding site.

The protein belongs to the peptidase M48B family. Zn(2+) serves as cofactor.

Its subcellular location is the cell membrane. The polypeptide is Protease HtpX homolog (Pediococcus pentosaceus (strain ATCC 25745 / CCUG 21536 / LMG 10740 / 183-1w)).